An 851-amino-acid chain; its full sequence is Probable disease resistance protein At1g15890 (851 aa).

One can recognise an NB-ARC domain in the interval 139–441; that stretch reads AEKIPAPKVE…CEGFIDGNED (303 aa). Residue 181 to 188 coordinates ATP; it reads GMGGVGKT. LRR repeat units follow at residues 514 to 535, 536 to 557, 560 to 582, 584 to 605, and 607 to 629; these read SLRRMSLMCNQIANISSSSNSP, NLSTLLLQNNKLVHISCDFFRF, ALVVLDLSRNSSLSSLPEAISKL, SLQYINLSTTGIKWLPVSFKEL, and KLIHLNLEFTDELESIVGIATSL.

Belongs to the disease resistance NB-LRR family.

Functionally, probable disease resistance protein. This chain is Probable disease resistance protein At1g15890, found in Arabidopsis thaliana (Mouse-ear cress).